We begin with the raw amino-acid sequence, 461 residues long: Probable ornithine decarboxylase (461 aa).

The disordered stretch occupies residues 1-35; it reads MTGTKRNGEEVVNENNNNNVAEETNKKAKVDESST. A compositionally biased stretch (low complexity) spans 13–22; sequence NENNNNNVAE. The span at 23–32 shows a compositional bias: basic and acidic residues; it reads ETNKKAKVDE. At lysine 116 the chain carries N6-(pyridoxal phosphate)lysine. Pyridoxal 5'-phosphate is bound by residues serine 247, glycine 284, and 317 to 320; that span reads EPGR. 375–376 lines the substrate pocket; the sequence is FD. The Proton donor; shared with dimeric partner role is filled by cysteine 402. Aspartate 403 is a substrate binding site. Pyridoxal 5'-phosphate is bound at residue tyrosine 431.

It belongs to the Orn/Lys/Arg decarboxylase class-II family. In terms of assembly, homodimer. Only the dimer is catalytically active, as the active sites are constructed of residues from both monomers. It depends on pyridoxal 5'-phosphate as a cofactor.

The catalysed reaction is L-ornithine + H(+) = putrescine + CO2. It functions in the pathway amine and polyamine biosynthesis; putrescine biosynthesis via L-ornithine pathway; putrescine from L-ornithine: step 1/1. Inhibited by antizyme (AZ) in response to polyamine levels. AZ inhibits the assembly of the functional homodimer by binding to ODC monomers and targeting them for ubiquitin-independent proteolytic destruction by the 26S proteasome. Functionally, catalyzes the first and rate-limiting step of polyamine biosynthesis that converts ornithine into putrescine, which is the precursor for the polyamines, spermidine and spermine. Polyamines are essential for cell proliferation and are implicated in cellular processes, ranging from DNA replication to apoptosis. This chain is Probable ornithine decarboxylase (odc), found in Dictyostelium discoideum (Social amoeba).